Here is a 449-residue protein sequence, read N- to C-terminus: Type 3 secretion system ATPase (449 aa).

An ATP-binding site is contributed by 178 to 183 (GCGKTT).

It belongs to the ATPase alpha/beta chains family. T3SS ATPase subfamily. In terms of assembly, the core secretion machinery of the T3SS is composed of approximately 20 different proteins, including cytoplasmic components, a base, an export apparatus and a needle. This subunit is part of the cytosolic complex. Forms homododecamers.

It localises to the cytoplasm. The enzyme catalyses ATP + H2O + cellular proteinSide 1 = ADP + phosphate + cellular proteinSide 2.. Functionally, ATPase component of the type III secretion system (T3SS), also called injectisome, which is used to inject bacterial effector proteins into eukaryotic host cells. Acts as a molecular motor to provide the energy that is required for the export of proteins. Required for type III secretion apparatus (T3SA) formation, proper protein secretion, host cell invasion and virulence. May play a critical role in T3SS substrate recognition, disassembly of the effector/chaperone complex and unfolding of the effector in an ATP-dependent manner prior to secretion. In Pseudomonas syringae pv. syringae, this protein is Type 3 secretion system ATPase.